The following is a 281-amino-acid chain: Light-independent protochlorophyllide reductase iron-sulfur ATP-binding protein (281 aa).

ATP is bound by residues 10–15 and lysine 39; that span reads GIGKST. Serine 14 provides a ligand contact to Mg(2+). [4Fe-4S] cluster is bound by residues cysteine 95 and cysteine 129. 180-181 contributes to the ATP binding site; that stretch reads NR.

It belongs to the NifH/BchL/ChlL family. In terms of assembly, homodimer. Protochlorophyllide reductase is composed of three subunits; ChlL, ChlN and ChlB. [4Fe-4S] cluster serves as cofactor.

The catalysed reaction is chlorophyllide a + oxidized 2[4Fe-4S]-[ferredoxin] + 2 ADP + 2 phosphate = protochlorophyllide a + reduced 2[4Fe-4S]-[ferredoxin] + 2 ATP + 2 H2O. It functions in the pathway porphyrin-containing compound metabolism; chlorophyll biosynthesis (light-independent). Component of the dark-operative protochlorophyllide reductase (DPOR) that uses Mg-ATP and reduced ferredoxin to reduce ring D of protochlorophyllide (Pchlide) to form chlorophyllide a (Chlide). This reaction is light-independent. The L component serves as a unique electron donor to the NB-component of the complex, and binds Mg-ATP. In Thermosynechococcus vestitus (strain NIES-2133 / IAM M-273 / BP-1), this protein is Light-independent protochlorophyllide reductase iron-sulfur ATP-binding protein.